Reading from the N-terminus, the 189-residue chain is Parkinson disease protein 7 homolog (189 aa).

Residue Ala-2 is modified to N-acetylalanine; in Protein/nucleic acid deglycase DJ-1, N-terminally processed. 2 S-palmitoyl cysteine lipidation sites follow: Cys-46 and Cys-53. Tyr-67 carries the phosphotyrosine modification. The active-site Nucleophile is the Cys-106. Residue Cys-106 is modified to Cysteine sulfinic acid (-SO2H); alternate. Cys-106 carries the S-palmitoyl cysteine; alternate lipid modification. His-126 is a catalytic residue. A Glycyl lysine isopeptide (Lys-Gly) (interchain with G-Cter in SUMO) cross-link involves residue Lys-130. An N6-acetyllysine modification is found at Lys-148. Residue Lys-182 is modified to N6-succinyllysine.

This sequence belongs to the peptidase C56 family. Homodimer. Binds EFCAB6/DJBP and PIAS2. Part of a ternary complex containing PARK7, EFCAB6/DJBP and AR. Interacts (via N-terminus) with OTUD7B. Interacts with BBS1, HIPK1, CLCF1 and MTERF. Forms a complex with PINK1 and PRKN. Interacts (via C-terminus) with NCF1; the interaction is enhanced by LPS and modulates NCF1 phosphorylation and membrane translocation. Interacts with NENF. Requires Deglycase activity does not require glutathione as a cofactor, however, glycated glutathione constitutes a PARK7 substrate. as cofactor. Post-translationally, sumoylated on Lys-130 by PIAS2 or PIAS4; which is essential for cell-growth promoting activity and transforming activity. Undergoes cleavage of a C-terminal peptide and subsequent activation of protease activity in response to oxidative stress. As to expression, detected in liver, heart, spleen and testis (at protein level). Detected in liver, heart, spleen, kidney, epididymidis, vas deferens, sperm cells and testis.

It localises to the cell membrane. The protein localises to the cytoplasm. The protein resides in the nucleus. It is found in the membrane raft. Its subcellular location is the mitochondrion. It localises to the endoplasmic reticulum. It carries out the reaction N(omega)-(1-hydroxy-2-oxopropyl)-L-arginyl-[protein] + H2O = lactate + L-arginyl-[protein] + H(+). It catalyses the reaction N(6)-(1-hydroxy-2-oxopropyl)-L-lysyl-[protein] + H2O = lactate + L-lysyl-[protein] + H(+). The enzyme catalyses S-(1-hydroxy-2-oxopropyl)-L-cysteinyl-[protein] + H2O = lactate + L-cysteinyl-[protein] + H(+). The catalysed reaction is N(omega)-(1-hydroxy-2-oxoethyl)-L-arginyl-[protein] + H2O = L-arginyl-[protein] + glycolate + H(+). It carries out the reaction N(6)-(1-hydroxy-2-oxoethyl)-L-lysyl-[protein] + H2O = glycolate + L-lysyl-[protein] + H(+). It catalyses the reaction S-(1-hydroxy-2-oxoethyl)-L-cysteinyl-[protein] + H2O = glycolate + L-cysteinyl-[protein] + H(+). The enzyme catalyses N(2)-(1-hydroxy-2-oxopropyl)-dGTP + H2O = lactate + dGTP + H(+). The catalysed reaction is N(2)-(1-hydroxy-2-oxopropyl)-GTP + H2O = lactate + GTP + H(+). It carries out the reaction N(2)-(1-hydroxy-2-oxopropyl)-GDP + H2O = lactate + GDP + H(+). It catalyses the reaction N(2)-(1-hydroxy-2-oxopropyl)-GMP + H2O = lactate + GMP + H(+). The enzyme catalyses N(2)-(1-hydroxy-2-oxoethyl)-dGTP + H2O = dGTP + glycolate + H(+). The catalysed reaction is N(2)-(1-hydroxy-2-oxoethyl)-GTP + H2O = glycolate + GTP + H(+). It carries out the reaction N(2)-(1-hydroxy-2-oxoethyl)-GDP + H2O = glycolate + GDP + H(+). It catalyses the reaction N(2)-(1-hydroxy-2-oxoethyl)-GMP + H2O = glycolate + GMP + H(+). The enzyme catalyses an N(2)-(1-hydroxy-2-oxopropyl)-guanosine in RNA + H2O = a guanosine in RNA + lactate + H(+). The catalysed reaction is an N(2)-(1-hydroxy-2-oxopropyl)-2'-deoxyguanosine in DNA + H2O = a 2'-deoxyguanosine in DNA + lactate + H(+). It carries out the reaction an N(2)-(1-hydroxy-2-oxoethyl)-guanosine in RNA + H2O = a guanosine in RNA + glycolate + H(+). It catalyses the reaction an N(2)-(1-hydroxy-2-oxoethyl)-2'-deoxyguanosine in DNA + H2O = a 2'-deoxyguanosine in DNA + glycolate + H(+). Its function is as follows. Multifunctional protein with controversial molecular function which plays an important role in cell protection against oxidative stress and cell death acting as oxidative stress sensor and redox-sensitive chaperone and protease. It is involved in neuroprotective mechanisms like the stabilization of NFE2L2 and PINK1 proteins, male fertility as a positive regulator of androgen signaling pathway as well as cell growth and transformation through, for instance, the modulation of NF-kappa-B signaling pathway. Has been described as a protein and nucleotide deglycase that catalyzes the deglycation of the Maillard adducts formed between amino groups of proteins or nucleotides and reactive carbonyl groups of glyoxals. But this function is rebuted by other works. As a protein deglycase, repairs methylglyoxal- and glyoxal-glycated proteins, and releases repaired proteins and lactate or glycolate, respectively. Deglycates cysteine, arginine and lysine residues in proteins, and thus reactivates these proteins by reversing glycation by glyoxals. Acts on early glycation intermediates (hemithioacetals and aminocarbinols), preventing the formation of advanced glycation endproducts (AGE) that cause irreversible damage. Also functions as a nucleotide deglycase able to repair glycated guanine in the free nucleotide pool (GTP, GDP, GMP, dGTP) and in DNA and RNA. Is thus involved in a major nucleotide repair system named guanine glycation repair (GG repair), dedicated to reversing methylglyoxal and glyoxal damage via nucleotide sanitization and direct nucleic acid repair. Protects histones from adduction by methylglyoxal, controls the levels of methylglyoxal-derived argininine modifications on chromatin. Able to remove the glycations and restore histone 3, histone glycation disrupts both local and global chromatin architecture by altering histone-DNA interactions as well as histone acetylation and ubiquitination levels. Displays a very low glyoxalase activity that may reflect its deglycase activity. Eliminates hydrogen peroxide and protects cells against hydrogen peroxide-induced cell death. Required for correct mitochondrial morphology and function as well as for autophagy of dysfunctional mitochondria. Plays a role in regulating expression or stability of the mitochondrial uncoupling proteins SLC25A14 and SLC25A27 in dopaminergic neurons of the substantia nigra pars compacta and attenuates the oxidative stress induced by calcium entry into the neurons via L-type channels during pacemaking. Regulates astrocyte inflammatory responses, may modulate lipid rafts-dependent endocytosis in astrocytes and neuronal cells. In pancreatic islets, involved in the maintenance of mitochondrial reactive oxygen species (ROS) levels and glucose homeostasis in an age- and diet dependent manner. Protects pancreatic beta cells from cell death induced by inflammatory and cytotoxic setting. Binds to a number of mRNAs containing multiple copies of GG or CC motifs and partially inhibits their translation but dissociates following oxidative stress. Metal-binding protein able to bind copper as well as toxic mercury ions, enhances the cell protection mechanism against induced metal toxicity. In macrophages, interacts with the NADPH oxidase subunit NCF1 to direct NADPH oxidase-dependent ROS production, and protects against sepsis. This Mesocricetus auratus (Golden hamster) protein is Parkinson disease protein 7 homolog (PARK7).